The chain runs to 318 residues: Glycine--tRNA ligase alpha subunit (318 aa).

Belongs to the class-II aminoacyl-tRNA synthetase family. As to quaternary structure, tetramer of two alpha and two beta subunits.

It localises to the cytoplasm. It catalyses the reaction tRNA(Gly) + glycine + ATP = glycyl-tRNA(Gly) + AMP + diphosphate. In Moraxella catarrhalis (Branhamella catarrhalis), this protein is Glycine--tRNA ligase alpha subunit (glyQ).